A 237-amino-acid chain; its full sequence is Ribonuclease PH (237 aa).

Phosphate contacts are provided by residues arginine 86 and glycine 124–arginine 126.

The protein belongs to the RNase PH family. Homohexameric ring arranged as a trimer of dimers.

It catalyses the reaction tRNA(n+1) + phosphate = tRNA(n) + a ribonucleoside 5'-diphosphate. In terms of biological role, phosphorolytic 3'-5' exoribonuclease that plays an important role in tRNA 3'-end maturation. Removes nucleotide residues following the 3'-CCA terminus of tRNAs; can also add nucleotides to the ends of RNA molecules by using nucleoside diphosphates as substrates, but this may not be physiologically important. Probably plays a role in initiation of 16S rRNA degradation (leading to ribosome degradation) during starvation. The polypeptide is Ribonuclease PH (Methylobacterium nodulans (strain LMG 21967 / CNCM I-2342 / ORS 2060)).